The sequence spans 225 residues: DNA repair protein RecO (225 aa).

The protein belongs to the RecO family.

Functionally, involved in DNA repair and RecF pathway recombination. The polypeptide is DNA repair protein RecO (Clostridium perfringens (strain ATCC 13124 / DSM 756 / JCM 1290 / NCIMB 6125 / NCTC 8237 / Type A)).